A 388-amino-acid chain; its full sequence is Single-stranded DNA-binding protein 3 (388 aa).

N-acetylmethionine is present on Met1. The 33-residue stretch at 16–48 (AREKLALYVYEYLLHVGAQKSAQTFLSEIRWEK) folds into the LisH domain. A disordered region spans residues 101–388 (VLGNIPPNDG…NYSPSMTMSV (288 aa)). Over residues 126–139 (GSQPSPHAQPPPHN) the composition is skewed to pro residues. 3 positions are modified to asymmetric dimethylarginine: Arg155, Arg161, and Arg165. Composition is skewed to low complexity over residues 200–209 (MQRMNPPRGM) and 250–268 (PNSA…TYVG). Residues 272-282 (GGGPPGTPIMP) show a composition bias toward pro residues. Residues 285–296 (ADSTNSSDNIYT) show a composition bias toward polar residues. Over residues 315–325 (GSDGPMGGMGG) the composition is skewed to gly residues. The span at 346-357 (NSPNNISGISNP) shows a compositional bias: low complexity. Phosphoserine occurs at positions 347, 352, and 355. A Phosphothreonine modification is found at Thr360. Residues 373–388 (HSFQNDNYSPSMTMSV) show a composition bias toward polar residues. Ser381 and Ser387 each carry phosphoserine.

Highly expressed in all hematopoietic tissues, including spleen, lymph node, peripheral blood, bone marrow, thymus, and fetal liver, with highest expression in thymus and fetal liver. Expression is also high in heart, brain, kidney, and skeletal muscle.

It is found in the nucleus. Functionally, may be involved in transcription regulation of the alpha 2(I) collagen gene where it binds to the single-stranded polypyrimidine sequences in the promoter region. The chain is Single-stranded DNA-binding protein 3 (SSBP3) from Homo sapiens (Human).